Consider the following 115-residue polypeptide: Nucleoid-associated protein LBL_0065 (115 aa).

The protein belongs to the YbaB/EbfC family. As to quaternary structure, homodimer.

It is found in the cytoplasm. The protein resides in the nucleoid. Functionally, binds to DNA and alters its conformation. May be involved in regulation of gene expression, nucleoid organization and DNA protection. This chain is Nucleoid-associated protein LBL_0065, found in Leptospira borgpetersenii serovar Hardjo-bovis (strain L550).